We begin with the raw amino-acid sequence, 103 residues long: Protamine-2 (103 aa).

The segment at 1–103 is disordered; it reads MVRYRTRSLS…RTRRRRCRRY (103 aa). Phosphoserine occurs at positions 8 and 10. The segment covering 8-17 has biased composition (basic and acidic residues); sequence SLSERPHEVH. Residues 18 to 29 show a composition bias toward low complexity; it reads GQQVHGQDQGHN. The residue at position 37 (Ser37) is a Phosphoserine. Basic and acidic residues predominate over residues 39–48; sequence EHVEVYERTH. Positions 49–103 are enriched in basic residues; it reads QGHSHHRRRRCSQRRLHRIHRRRHRSCRRRRRRSCRHRRRHRRGCRTRRRRCRRY.

This sequence belongs to the protamine P2 family. As to quaternary structure, interacts with TDRP. In terms of processing, proteolytic processing into mature chains is required for histone eviction during spermatogenesis. Transition proteins (TNP1 and TNP2) are required for processing. As to expression, testis.

The protein resides in the nucleus. The protein localises to the chromosome. In terms of biological role, protamines substitute for histones in the chromatin of sperm during the haploid phase of spermatogenesis. They compact sperm DNA into a highly condensed, stable and inactive complex. The chain is Protamine-2 (PRM2) from Erythrocebus patas (Red guenon).